The primary structure comprises 332 residues: L-lactate dehydrogenase C chain (332 aa).

At Ser-2 the chain carries Blocked amino end (Ser). NAD(+) is bound by residues 29-57 and Arg-99; that span reads GNVGMACAISILLKGLADELALVDADTNK. Substrate is bound by residues Arg-106, Asn-138, and Arg-169. Asn-138 is a binding site for NAD(+). The Proton acceptor role is filled by His-193. Thr-248 lines the substrate pocket.

Belongs to the LDH/MDH superfamily. LDH family. In terms of assembly, homotetramer. Interacts with RABL2/RABL2A; binds preferentially to GTP-bound RABL2. In terms of tissue distribution, expressed within the midpiece of sperm tail (at protein level).

Its subcellular location is the cytoplasm. The enzyme catalyses (S)-lactate + NAD(+) = pyruvate + NADH + H(+). It participates in fermentation; pyruvate fermentation to lactate; (S)-lactate from pyruvate: step 1/1. In terms of biological role, possible role in sperm motility. This is L-lactate dehydrogenase C chain (Ldhc) from Mus musculus (Mouse).